Consider the following 726-residue polypeptide: Beta-adducin (726 aa).

Residues 1-25 (MSEETVPEAASPPPPQGQPYFDRFS) are disordered. Residues serine 11 and serine 25 each carry the phosphoserine modification. The residue at position 55 (threonine 55) is a Phosphothreonine; by PKA. Serine 60 and serine 344 each carry phosphoserine. Residues 425–444 (KQQKEKTRWLNTPNTYLRVN) are interaction with calmodulin. The disordered stretch occupies residues 525–726 (AEKSRSPSTE…KSKKKEKVES (202 aa)). Residues serine 530 and serine 532 each carry the phosphoserine modification. A Phosphothreonine modification is found at threonine 533. Serine 535 is subject to Phosphoserine. The segment covering 566 to 586 (EEYKKEVERKKLELDGEKETA) has biased composition (basic and acidic residues). Positions 588–606 (EEPGSPAKSAPASPVQSPA) are enriched in low complexity. Residues serine 592, serine 596, serine 600, and serine 604 each carry the phosphoserine modification. Threonine 611 bears the Phosphothreonine mark. 4 positions are modified to phosphoserine: serine 613, serine 617, serine 619, and serine 621. A compositionally biased stretch (basic and acidic residues) spans 621 to 631 (SLEEGTKKTET). Positions 632–645 (SKAATTEPETTQPE) are enriched in low complexity. Residues 665–674 (GLSQMTTSAD) are compositionally biased toward polar residues. Threonine 675 is modified (phosphothreonine). Phosphoserine is present on residues serine 686, serine 689, serine 693, serine 697, serine 699, and serine 701. A compositionally biased stretch (low complexity) spans 689–701 (SGPMSPEGSPSKS). A compositionally biased stretch (basic residues) spans 702–726 (PSKKKKKFRTPSFLKKSKKKEKVES). The residue at position 703 (serine 703) is a Phosphoserine; by PKC. The segment at 704–721 (KKKKKFRTPSFLKKSKKK) is interaction with calmodulin. Phosphoserine; by PKA and PKC is present on serine 713.

Belongs to the aldolase class II family. Adducin subfamily. In terms of assembly, heterodimer of an alpha and a beta subunit. Found in a complex with ADD2, DMTN and SLC2A1. Interacts with SLC2A1. The N-terminus is blocked. Expressed mainly in brain, spleen, kidney cortex and medulla, and heart. Also expressed in human umbilical vein endothelial cells, human vascular smooth muscle cells, kidney tubular cells and K-562 cell line.

Its subcellular location is the cytoplasm. The protein localises to the cytoskeleton. The protein resides in the cell membrane. Functionally, membrane-cytoskeleton-associated protein that promotes the assembly of the spectrin-actin network. Binds to the erythrocyte membrane receptor SLC2A1/GLUT1 and may therefore provide a link between the spectrin cytoskeleton to the plasma membrane. Binds to calmodulin. Calmodulin binds preferentially to the beta subunit. This Homo sapiens (Human) protein is Beta-adducin (ADD2).